Consider the following 888-residue polypeptide: Calcium-transporting ATPase 1 (888 aa).

The next 4 membrane-spanning stretches (helical) occupy residues 53–75, 79–97, 246–266, and 283–303; these read IFAQ…SAFV, ADAS…IGVV, VGKY…LIGF, and AVAA…AIGV. Valine 284, alanine 285, isoleucine 287, and glutamate 289 together coordinate Ca(2+). Aspartate 331 serves as the catalytic 4-aspartylphosphate intermediate. Helical transmembrane passes span 675-695, 703-723, 747-767, 791-811, 831-851, and 865-885; these read ILFL…AILL, PIHI…SLGV, VPFL…AFIA, LLHA…VHSF, LVFS…IPPL, and WGFV…IKLA. Ca(2+) contacts are provided by asparagine 710 and aspartate 714.

This sequence belongs to the cation transport ATPase (P-type) (TC 3.A.3) family. Type IIA subfamily.

The protein resides in the cell membrane. It carries out the reaction Ca(2+)(in) + ATP + H2O = Ca(2+)(out) + ADP + phosphate + H(+). Inhibited by cyclopiazonic acid (CPA). In terms of biological role, catalyzes the hydrolysis of ATP coupled with the transport of calcium. The polypeptide is Calcium-transporting ATPase 1 (Bacillus cereus (strain ATCC 10987 / NRS 248)).